The sequence spans 424 residues: Kynureninase (424 aa).

Pyridoxal 5'-phosphate is bound by residues leucine 106, threonine 107, phenylalanine 134–aspartate 137, aspartate 219, histidine 222, and tyrosine 244. At lysine 245 the chain carries N6-(pyridoxal phosphate)lysine. Positions 274 and 302 each coordinate pyridoxal 5'-phosphate.

Belongs to the kynureninase family. As to quaternary structure, homodimer. The cofactor is pyridoxal 5'-phosphate.

It carries out the reaction L-kynurenine + H2O = anthranilate + L-alanine + H(+). The enzyme catalyses 3-hydroxy-L-kynurenine + H2O = 3-hydroxyanthranilate + L-alanine + H(+). The protein operates within amino-acid degradation; L-kynurenine degradation; L-alanine and anthranilate from L-kynurenine: step 1/1. Its pathway is cofactor biosynthesis; NAD(+) biosynthesis; quinolinate from L-kynurenine: step 2/3. Catalyzes the cleavage of L-kynurenine (L-Kyn) and L-3-hydroxykynurenine (L-3OHKyn) into anthranilic acid (AA) and 3-hydroxyanthranilic acid (3-OHAA), respectively. This chain is Kynureninase, found in Xanthomonas campestris pv. campestris (strain B100).